Here is a 764-residue protein sequence, read N- to C-terminus: Complement factor B (764 aa).

A signal peptide spans 1 to 25; it reads MGSNLSPQLCLMPFILGLLSGGVTT. 3 consecutive Sushi domains span residues 35-100, 101-160, and 163-220; these read GSCS…ECRA, IHCP…ICDN, and GYCS…SCQD. Cystine bridges form between Cys-37–Cys-76, Cys-62–Cys-98, Cys-103–Cys-145, Cys-131–Cys-158, Cys-165–Cys-205, and Cys-191–Cys-218. N-linked (GlcNAc...) asparagine glycosylation is found at Asn-122 and Asn-142. Residues 270–469 enclose the VWFA domain; it reads NIYLVLDGSD…NLEDVFYQMI (200 aa). Ser-278 and Ser-280 together coordinate Mg(2+). Asn-285 is a glycosylation site (N-linked (GlcNAc...) asparagine). A Mg(2+)-binding site is contributed by Thr-353. An N-linked (GlcNAc...) asparagine glycan is attached at Asn-378. The Peptidase S1 domain maps to 477 to 757; it reads LCGMVWEHRK…VLPWLKEKLQ (281 aa). Intrachain disulfides connect Cys-478-Cys-596, Cys-511-Cys-527, Cys-599-Cys-615, Cys-656-Cys-682, and Cys-695-Cys-725. Catalysis depends on charge relay system residues His-526 and Asp-576. The Charge relay system role is filled by Ser-699.

Belongs to the peptidase S1 family. As to quaternary structure, monomer. Interacts with complement C3b; this interaction is dependent on the presence of Mg(2+). In terms of assembly, catalytic component of the C3 convertase of the alternative complement pathway, also named C3bBb, composed of complement factor B Bb and complement C3b. Catalytic component of the C5 convertase of the alternative complement pathway, also named C3bBb3b, composed of complement factor B Bb and additional molecules of complement C3b. Interacts to CFP; this interaction contributes to the stabilization of the active C3-convertase enzyme complex. Mg(2+) is required as a cofactor. It depends on Mn(2+) as a cofactor. In terms of processing, cleaved by CFD following activation of the alternative complement system, generating Ba and Bb chains. Cleavage and activation takes place when CFB is already associated with complement C3b.

The protein resides in the secreted. The protein localises to the cell surface. The catalysed reaction is Cleavage of Arg-|-Ser bond in complement component C3 alpha-chain to yield C3a and C3b, and Arg-|-Xaa bond in complement component C5 alpha-chain to yield C5a and C5b.. In terms of biological role, precursor of the catalytic component of the C3 and C5 convertase complexes of the alternative pathway of the complement system, a cascade of proteins that leads to phagocytosis and breakdown of pathogens and signaling that strengthens the adaptive immune system. The alternative complement pathway acts as an amplification loop that enhances other complement pathways (classical, lectin and GZMK) by promoting formation of additional C3 and C5 convertases. CFB is cleaved and activated by CFD to generate Ba and Bb chains; Bb chain constituting the catalytic component of the C3 and C5 convertases. Serine protease component of the complement C3 and C5 convertase complexes of the alternative complement pathway. Following cleavage and activation by factor D (CFD), forms the C3 convertase together with complement C3b. As part of the C3 convertase, cleaves and activates C3 into C3a anaphylatoxin and C3b opsonin, the next components of the complement pathways. When an additional complement C3b molecule binds to the C3 convertase, forms the C5 convertase, which cleaves and activates C5 into C5a anaphylatoxin and C5b component of the membrane attack complex. Functionally, involved in proliferation and differentiation of preactivated B-lymphocytes, rapid spreading of peripheral blood monocytes, stimulation of lymphocyte blastogenesis and lysis of erythrocytes. This Gorilla gorilla gorilla (Western lowland gorilla) protein is Complement factor B (CFB).